Reading from the N-terminus, the 387-residue chain is ATP phosphoribosyltransferase regulatory subunit (387 aa).

It belongs to the class-II aminoacyl-tRNA synthetase family. HisZ subfamily. Heteromultimer composed of HisG and HisZ subunits.

The protein resides in the cytoplasm. Its pathway is amino-acid biosynthesis; L-histidine biosynthesis; L-histidine from 5-phospho-alpha-D-ribose 1-diphosphate: step 1/9. Required for the first step of histidine biosynthesis. May allow the feedback regulation of ATP phosphoribosyltransferase activity by histidine. The sequence is that of ATP phosphoribosyltransferase regulatory subunit from Polynucleobacter necessarius subsp. necessarius (strain STIR1).